The following is an 88-amino-acid chain: Small ribosomal subunit protein bS20 (88 aa).

The disordered stretch occupies residues 1-20 (MPNIKSAIKRTKTNNERRAH).

It belongs to the bacterial ribosomal protein bS20 family.

Functionally, binds directly to 16S ribosomal RNA. The protein is Small ribosomal subunit protein bS20 of Bacillus velezensis (strain DSM 23117 / BGSC 10A6 / LMG 26770 / FZB42) (Bacillus amyloliquefaciens subsp. plantarum).